We begin with the raw amino-acid sequence, 467 residues long: Flagellum-specific ATP synthase (467 aa).

Residue 195–202 (SSSGIGKS) participates in ATP binding.

It belongs to the ATPase alpha/beta chains family.

It is found in the cytoplasm. The enzyme catalyses ATP + H2O + 4 H(+)(in) = ADP + phosphate + 5 H(+)(out). In terms of biological role, probable catalytic subunit of a protein translocase for flagellum-specific export, or a proton translocase involved in local circuits at the flagellum. May be involved in a specialized protein export pathway that proceeds without signal peptide cleavage. The sequence is that of Flagellum-specific ATP synthase (fliI) from Buchnera aphidicola subsp. Acyrthosiphon pisum (strain APS) (Acyrthosiphon pisum symbiotic bacterium).